The following is a 160-amino-acid chain: Leucokinin (160 aa).

Positions 1-19 (MAKIVLCMVLLAFGRQVYG) are cleaved as a signal peptide. Residues 20–130 (ASLVPAPISE…RIKSQLQRDE (111 aa)) constitute a propeptide that is removed on maturation. G147 carries the post-translational modification Glycine amide. The propeptide occupies 151–160 (SPEPPILPDY).

It localises to the secreted. Its function is as follows. Acts through intracellular calcium in Malpighian tubule stellate cells to raise chloride conductance. The protein is Leucokinin (Lk) of Drosophila melanogaster (Fruit fly).